The sequence spans 550 residues: Coiled-coil domain-containing protein 102A (550 aa).

Disordered regions lie at residues Met1–Trp69 and Gly138–Glu247. 3 positions are modified to phosphoserine: Ser12, Ser26, and Ser28. Pro residues predominate over residues Ser37–Pro61. Positions Arg72–Arg161 form a coiled coil. Basic and acidic residues-rich tracts occupy residues Gly138–Arg159 and Gln169–Ser188. Coiled coils occupy residues Gln263–Thr396 and Lys427–Leu518. 2 disordered regions span residues Asp472–Asn497 and Leu509–Ala550. Residues Glu530–Ala550 are compositionally biased toward acidic residues. Ser537 carries the post-translational modification Phosphoserine.

The sequence is that of Coiled-coil domain-containing protein 102A (CCDC102A) from Homo sapiens (Human).